We begin with the raw amino-acid sequence, 32 residues long: Peptide II.10.10 (32 aa).

3 cysteine pairs are disulfide-bonded: C5-C24, C10-C29, and C14-C31.

This sequence belongs to the short scorpion toxin superfamily. Potassium channel inhibitor family. Alpha-KTx 10 subfamily. In terms of tissue distribution, expressed by the venom gland.

The protein resides in the secreted. This chain is Peptide II.10.10, found in Centruroides tecomanus (Scorpion).